A 241-amino-acid chain; its full sequence is Mitochondrial inner membrane protease ATP23 (241 aa).

Position 141 (His-141) interacts with a divalent metal cation. Residue Glu-142 is part of the active site. His-145 provides a ligand contact to a divalent metal cation.

Belongs to the peptidase M76 family.

Its subcellular location is the mitochondrion inner membrane. In terms of biological role, has a dual role in the assembly of mitochondrial ATPase. Acts as a protease that removes N-terminal residues of mitochondrial ATPase CF(0) subunit 6 at the intermembrane space side. Also involved in the correct assembly of the membrane-embedded ATPase CF(0) particle, probably mediating association of subunit 6 with the subunit 9 ring. This Lodderomyces elongisporus (strain ATCC 11503 / CBS 2605 / JCM 1781 / NBRC 1676 / NRRL YB-4239) (Yeast) protein is Mitochondrial inner membrane protease ATP23 (ATP23).